Consider the following 658-residue polypeptide: Glycogen debranching enzyme (658 aa).

The Nucleophile role is filled by aspartate 336. The active-site Proton donor is the glutamate 371.

This sequence belongs to the glycosyl hydrolase 13 family.

The enzyme catalyses Hydrolysis of (1-&gt;6)-alpha-D-glucosidic linkages to branches with degrees of polymerization of three or four glucose residues in limit dextrin.. It functions in the pathway glycan degradation; glycogen degradation. Functionally, removes maltotriose and maltotetraose chains that are attached by 1,6-alpha-linkage to the limit dextrin main chain, generating a debranched limit dextrin. This is Glycogen debranching enzyme from Klebsiella pneumoniae (strain 342).